The following is a 122-amino-acid chain: Ribonuclease P protein component (122 aa).

Belongs to the RnpA family. As to quaternary structure, consists of a catalytic RNA component (M1 or rnpB) and a protein subunit.

It carries out the reaction Endonucleolytic cleavage of RNA, removing 5'-extranucleotides from tRNA precursor.. RNaseP catalyzes the removal of the 5'-leader sequence from pre-tRNA to produce the mature 5'-terminus. It can also cleave other RNA substrates such as 4.5S RNA. The protein component plays an auxiliary but essential role in vivo by binding to the 5'-leader sequence and broadening the substrate specificity of the ribozyme. In Oenococcus oeni (strain ATCC BAA-331 / PSU-1), this protein is Ribonuclease P protein component.